An 830-amino-acid chain; its full sequence is C-Jun-amino-terminal kinase-interacting protein 2 (830 aa).

5 disordered regions span residues 1–26 (MADR…PPQD), 44–354 (CGLG…ADSP), 367–438 (EGSS…PGPC), 452–504 (LWAT…GSTA), and 539–574 (GNDS…PDSP). Residues 77–105 (DFQEFEMIDDNEEEDDEEEEEEEEEEEDG) show a composition bias toward acidic residues. The JNK-binding domain (JBD) stretch occupies residues 111-278 (AGGGPGSQAL…RMISSISETE (168 aa)). The segment covering 142 to 172 (LHLTTLGAQDSLNNNNGGFTSAPPSSWQETV) has biased composition (polar residues). Composition is skewed to low complexity over residues 176–190 (PAQE…PLLP) and 218–227 (ASSGGASPSS). Basic and acidic residues predominate over residues 233-249 (ADLRSHSSGGHEGRRSS). Residues 242–504 (GHEGRRSSQE…PGSRTTGSTA (263 aa)) are necessary for interaction with FGF13. Phosphoserine is present on residues Ser257, Ser304, and Ser307. Residues 271-307 (ISSISETELELSSDGGSSSGRSSHLTNSIEEASSPAS) are compositionally biased toward low complexity. Over residues 333 to 352 (TNSEYESGSESEPDLSEDAD) the composition is skewed to acidic residues. Low complexity predominate over residues 427-437 (APRLGPAQPGP). Composition is skewed to acidic residues over residues 471 to 490 (SEEE…DAED) and 541 to 555 (DSEE…EEEA). One can recognise an SH3 domain in the interval 610 to 671 (EREQTHRAVF…PAFYAHAVPG (62 aa)). Positions 683-819 (PCWVDRFDVQ…FLEYYQEHLA (137 aa)) constitute a PID domain.

Belongs to the JIP scaffold family. In terms of assembly, forms homo- or heterooligomeric complexes. Binds specific components of the JNK signaling pathway namely JNK1, JNK2, JNK3, MAP2K7, MAP3K10, MAP3K11, MAP3K12 and MAPK13. Also binds the proline-rich domain-containing splice variant of apolipoprotein E receptor 2 (ApoER2). Binds the TPR motif-containing C-terminal of kinesin light chain. Binds the cytoplasmic tails of LRP1 and LRP2 (Megalin). Interacts with DCLK2. Interacts with FGF13; enables the interaction with MAPK13 and may regulate the MAPK8IP2 scaffolding activity. Interacts with TIAM1 and TIAM2. Interacts with SH3RF2. Highly expressed in brain. Expressed in all neurons. Also expressed in testis, primarily in the epididymal epidermis.

It localises to the cytoplasm. In terms of biological role, the JNK-interacting protein (JIP) group of scaffold proteins selectively mediates JNK signaling by aggregating specific components of the MAPK cascade to form a functional JNK signaling module. JIP2 inhibits IL1 beta-induced apoptosis in insulin-secreting cells. The chain is C-Jun-amino-terminal kinase-interacting protein 2 (Mapk8ip2) from Mus musculus (Mouse).